The sequence spans 79 residues: Acyl carrier protein (79 aa).

The region spanning 2–77 (SDIEERVKKI…SAIDYVNAHK (76 aa)) is the Carrier domain. At Ser-37 the chain carries O-(pantetheine 4'-phosphoryl)serine.

The protein belongs to the acyl carrier protein (ACP) family. Post-translationally, 4'-phosphopantetheine is transferred from CoA to a specific serine of apo-ACP by AcpS. This modification is essential for activity because fatty acids are bound in thioester linkage to the sulfhydryl of the prosthetic group.

It is found in the cytoplasm. The protein operates within lipid metabolism; fatty acid biosynthesis. Functionally, carrier of the growing fatty acid chain in fatty acid biosynthesis. The protein is Acyl carrier protein of Pseudoalteromonas atlantica (strain T6c / ATCC BAA-1087).